The primary structure comprises 766 residues: TBC1 domain family member 30 (766 aa).

Residues 87-295 form the Rab-GAP TBC domain; sequence GIPKEWRRKV…KIWDSVFFEG (209 aa). The disordered stretch occupies residues 380 to 406; that stretch reads PTSVSGRHSKARDSDDENGPDDEDAVA. The span at 393–404 shows a compositional bias: acidic residues; that stretch reads SDDENGPDDEDA. Positions 422 to 491 form a coiled coil; that stretch reads ELQKYQKQIK…YSRIKKKQQQ (70 aa). Disordered stretches follow at residues 603–647 and 731–766; these read SSLG…EPVF and NLGL…TKKR. Ser642 carries the post-translational modification Phosphoserine. A compositionally biased stretch (polar residues) spans 751-766; it reads RGFNKSGIGNSSTKKR.

Its subcellular location is the cell membrane. Functionally, may act as a GTPase-activating protein for Rab family protein(s). The sequence is that of TBC1 domain family member 30 (Tbc1d30) from Mus musculus (Mouse).